Reading from the N-terminus, the 67-residue chain is Large ribosomal subunit protein bL35 (67 aa).

It belongs to the bacterial ribosomal protein bL35 family.

This chain is Large ribosomal subunit protein bL35, found in Rhizorhabdus wittichii (strain DSM 6014 / CCUG 31198 / JCM 15750 / NBRC 105917 / EY 4224 / RW1) (Sphingomonas wittichii).